The primary structure comprises 320 residues: Retron Ec86 reverse transcriptase (320 aa).

The Reverse transcriptase domain occupies 34 to 248; sequence VETLRLLIYT…SQRKVTGLVI (215 aa). Residues D119, D197, and D198 each coordinate Mg(2+). A necessary and required for recognition and binding of RNA region spans residues 230–320; that stretch reads KKTCISGPRS…GKNPLNKAKT (91 aa).

This sequence belongs to the bacterial reverse transcriptase family.

The enzyme catalyses DNA(n) + a 2'-deoxyribonucleoside 5'-triphosphate = DNA(n+1) + diphosphate. Functionally, reverse transcriptase (RT) component of antiviral defense system retron Ec86, composed of a non-coding RNA (ncRNA), a ribosyltransferase/DNA-binding protein and this RT. Expression of the 3-gene retron confers protection against bacteriophage T5. At multiplicity of infection (MOI) of 0.02 cultures grow normally when infected with T5 without collapsing, at MOI 2 cultures enter growth stasis. Responsible for synthesis of msDNA (a branched molecule with RNA linked by a 2',5'-phosphodiester bond to ssDNA). The retron transcript serves as primer (from a conserved internal G residue) and template for the reaction, and codes for the RT. Recognizes only its cognate RNA as a primer template. Overexpression of the ncRNA and RT (without the ribosyltransferase), which leads to increased levels of msDNA, is mutagenic in vivo. This may be due to a mismatch in the msDNA stem which binds and sequesters MutS and/or MutL. The chain is Retron Ec86 reverse transcriptase from Escherichia coli.